The sequence spans 452 residues: Transcription factor AP-2-delta (452 aa).

Ser239 is subject to Phosphoserine; by PKA. Residues 280–410 are H-S-H (helix-span-helix), dimerization; that stretch reads RRKAANVTLL…VLSEMLNYLE (131 aa). Residues 416 to 452 form a disordered region; the sequence is KNGGAADSGQGHANSEKAPLRKTSEAAVKEGKTEKTD. A compositionally biased stretch (basic and acidic residues) spans 429–452; sequence NSEKAPLRKTSEAAVKEGKTEKTD.

It belongs to the AP-2 family. As to quaternary structure, binds DNA as a dimer. Can form homodimers or heterodimers with other AP-2 family members. As to expression, highly expressed in brain, placenta, skeletal muscle, thymus, small intestine, and prostate, and expressed at lower levels in leukocyte, spleen, testis, ovary and colon. Barely detectable in heart, kidney, liver, lung or pancreas.

Its subcellular location is the nucleus. In terms of biological role, sequence-specific DNA-binding protein that interacts with inducible viral and cellular enhancer elements to regulate transcription of selected genes. AP-2 factors bind to the consensus sequence 5'-GCCNNNGGC-3' and activate genes involved in a large spectrum of important biological functions including proper eye, face, body wall, limb and neural tube development. They also suppress a number of genes including MCAM/MUC18, C/EBP alpha and MYC. The chain is Transcription factor AP-2-delta from Homo sapiens (Human).